The following is a 70-amino-acid chain: Sporulation protein YhaL (70 aa).

The chain crosses the membrane as a helical span at residues 3 to 23 (FFPWWVYLCIVGIIFSAYKLV). A disordered region spans residues 48-70 (MEKERERRSSQQHEEENQNHSIA).

The protein localises to the cell membrane. Its function is as follows. Required for efficient sporulation. This is Sporulation protein YhaL (yhaL) from Bacillus subtilis (strain 168).